The following is a 522-amino-acid chain: 56 kDa type-specific antigen (522 aa).

The N-terminal stretch at 1-22 (MKKIMLIASAMSALSLPFSASA) is a signal peptide. A helical membrane pass occupies residues 67–87 (LTTMLPFGGTLAAGMTIAPGF). The interval 385 to 417 (AQEEGDDQSQVSCNDKKQQAVAEDSKAGSSKEG) is disordered. Basic and acidic residues predominate over residues 398-417 (NDKKQQAVAEDSKAGSSKEG). A helical transmembrane segment spans residues 470–490 (IGVVASGVLGVAINVADGVCV).

The protein resides in the cell membrane. In terms of biological role, may be an adherent factor for rickettsial adsorption to the host-cell surface and a determinant of virulence of individual rickettsial strain. It is the major outer membrane protein. The polypeptide is 56 kDa type-specific antigen (Orientia tsutsugamushi (Rickettsia tsutsugamushi)).